Consider the following 342-residue polypeptide: Protein-glutamate methylesterase/protein-glutamine glutaminase 1 (342 aa).

The 119-residue stretch at 3–121 folds into the Response regulatory domain; sequence RVLVIDDSLF…NIREIGGELK (119 aa). Residue D54 is modified to 4-aspartylphosphate. A CheB-type methylesterase domain is found at 141–340; sequence DSNARNVVLI…EKIVETIRAM (200 aa). Residues S153, H180, and D282 contribute to the active site.

Belongs to the CheB family. Phosphorylated by CheA. Phosphorylation of the N-terminal regulatory domain activates the methylesterase activity.

The protein resides in the cytoplasm. It catalyses the reaction [protein]-L-glutamate 5-O-methyl ester + H2O = L-glutamyl-[protein] + methanol + H(+). The catalysed reaction is L-glutaminyl-[protein] + H2O = L-glutamyl-[protein] + NH4(+). Its function is as follows. Involved in chemotaxis. Part of a chemotaxis signal transduction system that modulates chemotaxis in response to various stimuli. Catalyzes the demethylation of specific methylglutamate residues introduced into the chemoreceptors (methyl-accepting chemotaxis proteins or MCP) by CheR. Also mediates the irreversible deamidation of specific glutamine residues to glutamic acid. The protein is Protein-glutamate methylesterase/protein-glutamine glutaminase 1 of Methanospirillum hungatei JF-1 (strain ATCC 27890 / DSM 864 / NBRC 100397 / JF-1).